The following is a 504-amino-acid chain: DnaJ homolog subfamily C member 3 (504 aa).

The first 31 residues, 1–31 (MVAPGSVTSRLGSVFPFLLVLVDLQYEGAEC), serve as a signal peptide directing secretion. 9 TPR repeats span residues 37 to 70 (VEKHLELGKKLLAAGQLADALSQFHAAVDGDPDN), 72 to 104 (IAYYRRATVFLAMGKSKAALPDLTKVIQLKMDF), 105 to 138 (TAARLQRGHLLLKQGKLDEAEDDFKKVLKSNPSE), 154 to 187 (MQRLRSQALNAFGSGDYTAAIAFLDKILEVCVWD), 189 to 221 (ELRELRAECFIKEGEPRKAISDLKAASKLKNDN), 222 to 255 (TEAFYKISTLYYQLGDHELSLSEVRECLKLDQDH), 268 to 301 (LNKLIESAEELIRDGRYTDATSKYESVMKTEPSI), 306 to 339 (VRSKERICHCFSKDEKPVEAIRVCSEVLQMEPDN), and 340 to 373 (VNALKDRAEAYLIEEMYDEAIQDYETAQEHNEND). A disulfide bridge links Cys-248 with Cys-258. Phosphoserine; by FAM20C is present on Ser-274. A disulfide bridge connects residues Cys-313 and Cys-329. The flexible linker stretch occupies residues 375 to 393 (QIREGLEKAQRLLKQSQKR). The J domain occupies 394–462 (DYYKILGVKR…EMRKKFDDGE (69 aa)). Residues 451–481 (DPEMRKKFDDGEDPLDAESQQGGGGNPFHRS) form a disordered region.

As to quaternary structure, interacts with EIF2AK4/GCN2; this interaction occurs under endoplasmic reticulum (ER) stress, hypothermic and amino acid starving stress conditions and inhibits EIF2AK4/GCN2 kinase activity. Interacts with EIF2AK3. Interacts with EIF2AK2. Forms a trimeric complex with DNAJB1 and HSPA8. Interacts with THAP12. As to expression, widely expressed with high level in the pancreas and testis. Also expressed in cell lines with different levels.

Its subcellular location is the endoplasmic reticulum. Functionally, involved in the unfolded protein response (UPR) during endoplasmic reticulum (ER) stress. Acts as a negative regulator of the EIF2AK4/GCN2 kinase activity by preventing the phosphorylation of eIF-2-alpha at 'Ser-52' and hence attenuating general protein synthesis under ER stress, hypothermic and amino acid starving stress conditions. Co-chaperone of HSPA8/HSC70, it stimulates its ATPase activity. May inhibit both the autophosphorylation of EIF2AK2/PKR and the ability of EIF2AK2 to catalyze phosphorylation of the EIF2A. May inhibit EIF2AK3/PERK activity. This is DnaJ homolog subfamily C member 3 (DNAJC3) from Homo sapiens (Human).